The following is a 501-amino-acid chain: Protein translocase subunit SecD (501 aa).

Transmembrane regions (helical) follow at residues 9–29 (NLWLHLLGLVILTLLSAYAVV), 339–359 (AIEQGIKAGILAIILLAVVLI), 371–391 (ISIFLNVLFLLASMAFLGATL), 394–414 (PGIAGIILNMGIAVDSNVLIF), 447–467 (VTLLVASVILFQFGSGPVKGF), and 470–490 (TLALGTIASFISNVYYAKVFL).

This sequence belongs to the SecD/SecF family. SecD subfamily. As to quaternary structure, forms a complex with SecF. Part of the essential Sec protein translocation apparatus which comprises SecA, SecYEG and auxiliary proteins SecDF. Other proteins may also be involved.

The protein localises to the cell inner membrane. Functionally, part of the Sec protein translocase complex. Interacts with the SecYEG preprotein conducting channel. SecDF uses the proton motive force (PMF) to complete protein translocation after the ATP-dependent function of SecA. The protein is Protein translocase subunit SecD of Aquifex aeolicus (strain VF5).